The primary structure comprises 87 residues: Small ribosomal subunit protein uS15c (87 aa).

This sequence belongs to the universal ribosomal protein uS15 family. As to quaternary structure, part of the 30S ribosomal subunit.

The protein resides in the plastid. It localises to the chloroplast. The polypeptide is Small ribosomal subunit protein uS15c (rps15) (Solanum tuberosum (Potato)).